Consider the following 546-residue polypeptide: CTP synthase (546 aa).

Positions 1–266 are amidoligase domain; the sequence is MTTNYIFVTG…DDLVCQRFGI (266 aa). Serine 14 is a CTP binding site. A UTP-binding site is contributed by serine 14. Residues 15-20 and aspartate 72 contribute to the ATP site; that span reads SLGKGI. Residues aspartate 72 and glutamate 140 each coordinate Mg(2+). CTP-binding positions include 147–149, 187–192, and lysine 223; these read DIE and KTKPTQ. Residues 187-192 and lysine 223 contribute to the UTP site; that span reads KTKPTQ. Residue 239–241 coordinates ATP; the sequence is KDV. Positions 291-542 constitute a Glutamine amidotransferase type-1 domain; the sequence is VIGMVGKYIE…VKAAGESVRG (252 aa). Residue glycine 352 participates in L-glutamine binding. Cysteine 379 functions as the Nucleophile; for glutamine hydrolysis in the catalytic mechanism. L-glutamine-binding positions include 380–383, glutamate 403, and arginine 470; that span reads LGMQ. Residues histidine 515 and glutamate 517 contribute to the active site.

This sequence belongs to the CTP synthase family. In terms of assembly, homotetramer.

The catalysed reaction is UTP + L-glutamine + ATP + H2O = CTP + L-glutamate + ADP + phosphate + 2 H(+). The enzyme catalyses L-glutamine + H2O = L-glutamate + NH4(+). It catalyses the reaction UTP + NH4(+) + ATP = CTP + ADP + phosphate + 2 H(+). The protein operates within pyrimidine metabolism; CTP biosynthesis via de novo pathway; CTP from UDP: step 2/2. With respect to regulation, allosterically activated by GTP, when glutamine is the substrate; GTP has no effect on the reaction when ammonia is the substrate. The allosteric effector GTP functions by stabilizing the protein conformation that binds the tetrahedral intermediate(s) formed during glutamine hydrolysis. Inhibited by the product CTP, via allosteric rather than competitive inhibition. In terms of biological role, catalyzes the ATP-dependent amination of UTP to CTP with either L-glutamine or ammonia as the source of nitrogen. Regulates intracellular CTP levels through interactions with the four ribonucleotide triphosphates. This chain is CTP synthase, found in Aliivibrio fischeri (strain MJ11) (Vibrio fischeri).